Consider the following 211-residue polypeptide: Pyridoxine/pyridoxamine 5'-phosphate oxidase (211 aa).

Residues 8-11 (RRDY) and Lys-66 each bind substrate. FMN is bound by residues 61 to 66 (RLVLLK), 76 to 77 (FT), Arg-82, Lys-83, and Gln-105. Substrate is bound by residues Tyr-123, Arg-127, and Ser-131. Residues 140-141 (QS) and Trp-184 contribute to the FMN site. 190–192 (RLH) contributes to the substrate binding site. Residue Arg-194 coordinates FMN.

It belongs to the pyridoxamine 5'-phosphate oxidase family. In terms of assembly, homodimer. It depends on FMN as a cofactor.

The enzyme catalyses pyridoxamine 5'-phosphate + O2 + H2O = pyridoxal 5'-phosphate + H2O2 + NH4(+). The catalysed reaction is pyridoxine 5'-phosphate + O2 = pyridoxal 5'-phosphate + H2O2. It participates in cofactor metabolism; pyridoxal 5'-phosphate salvage; pyridoxal 5'-phosphate from pyridoxamine 5'-phosphate: step 1/1. Its pathway is cofactor metabolism; pyridoxal 5'-phosphate salvage; pyridoxal 5'-phosphate from pyridoxine 5'-phosphate: step 1/1. Catalyzes the oxidation of either pyridoxine 5'-phosphate (PNP) or pyridoxamine 5'-phosphate (PMP) into pyridoxal 5'-phosphate (PLP). The polypeptide is Pyridoxine/pyridoxamine 5'-phosphate oxidase (Thermosynechococcus vestitus (strain NIES-2133 / IAM M-273 / BP-1)).